The chain runs to 304 residues: N-acetyl-D-glucosamine kinase (304 aa).

Residues 4–11 (GFDMGGTK) and 133–140 (GLGGGLVI) contribute to the ATP site. Zn(2+) is bound by residues His-157, Cys-177, Cys-179, and Cys-184.

It belongs to the ROK (NagC/XylR) family. NagK subfamily.

The catalysed reaction is N-acetyl-D-glucosamine + ATP = N-acetyl-D-glucosamine 6-phosphate + ADP + H(+). It functions in the pathway cell wall biogenesis; peptidoglycan recycling. Catalyzes the phosphorylation of N-acetyl-D-glucosamine (GlcNAc) derived from cell-wall degradation, yielding GlcNAc-6-P. The polypeptide is N-acetyl-D-glucosamine kinase (Pectobacterium carotovorum subsp. carotovorum (strain PC1)).